Reading from the N-terminus, the 280-residue chain is MERVNLGGLGYDNGGVMMTRDPKPRLRWTADLHDRFVDAVAKLGGADKATPKSVLKLMGLKGLTLYHLKSHLQKYRLGQQQGKKQNRTEQNKENAGSSYVHFDNCSQGGISNDSRFDNHQRQSGNVPFAEAMRHQVDAQQRFQEQLEVQKKLQMRMEAQGKYLLTLLEKAQKSLPCGNAGETDKGQFSDFNLALSGLVGSDRKNEKAGLVTDISHLNGGDSSQEFRLCGEQEKIETGDACVKPESGFVHFDLNSKSGYDLLNCGKYGIEVKPNVIGDRLQ.

In terms of domain architecture, HTH myb-type spans 20–80 (RDPKPRLRWT…HLQKYRLGQQ (61 aa)). The H-T-H motif DNA-binding region spans 51 to 76 (PKSVLKLMGLKGLTLYHLKSHLQKYR). Residues 77–98 (LGQQQGKKQNRTEQNKENAGSS) are disordered. A coiled coil region spans residues 129–149 (AEAMRHQVDAQQRFQEQLEVQ). The short motif at 142–147 (FQEQLE) is the LHEQLE element.

It belongs to the MYB-CC family.

The protein resides in the nucleus. The protein is Myb family transcription factor PHL11 of Arabidopsis thaliana (Mouse-ear cress).